The primary structure comprises 436 residues: UPF0597 protein YhaM (436 aa).

Belongs to the UPF0597 family.

In Salmonella newport (strain SL254), this protein is UPF0597 protein YhaM.